We begin with the raw amino-acid sequence, 521 residues long: MSDTEDLAALNDRLMAKNHALAEALSRAGKELTKAKSQLAQLAQPPLTFATMVKVDSTRTDEDGIQHASAEVISGTRRMVVPVASNVNAARLTAGATVMLNEKLVLVEQRDADTVGQIRSVKQVLDDGRLIVTDASGNPVLIRRSGALAYAGINQGDRIIIDPSVRLAIEALPAEGDKDLVLEETPDVTFADIGGLDSEIGRIRDAVQLPFQHRALFERYDLKPPKGVLLYGPPGNGKTMIAKAVANALCEGGYDSNGDGAISPAETHVKGVFLSVKGPELLNKYVGESERLIRLIFQRARERAADGNPVVVFIDEMDSLLRTRGSGVSSDVETTIVPQFLSELDGVESLDNVMVIGASNRVDMIDPAVLRPGRLDVKIRVGRPKTNQAIAIVDHYLTDDLPLEDGVDAHALSAVLVHDIYGTSERRHLCDVQEENGQWHALFLADVVSGAMLKNIVDRAKTRAVKESIETGLDVALTVPLLAAAVEDEYRETRDSMADVDPEQWSRINGMDPIRRIRTAE.

The stretch at 4–44 forms a coiled coil; the sequence is TEDLAALNDRLMAKNHALAEALSRAGKELTKAKSQLAQLAQ. 235–240 contacts ATP; sequence GNGKTM.

The protein belongs to the AAA ATPase family. As to quaternary structure, homohexamer. Assembles into a hexameric ring structure.

This Bifidobacterium longum (strain DJO10A) protein is AAA ATPase forming ring-shaped complexes.